The primary structure comprises 142 residues: Ribosome-binding factor A (142 aa).

A disordered region spans residues 119 to 142; sequence EAKQKQHGVETDAEQGDTKEEGDK.

This sequence belongs to the RbfA family. As to quaternary structure, monomer. Binds 30S ribosomal subunits, but not 50S ribosomal subunits or 70S ribosomes.

The protein resides in the cytoplasm. In terms of biological role, one of several proteins that assist in the late maturation steps of the functional core of the 30S ribosomal subunit. Associates with free 30S ribosomal subunits (but not with 30S subunits that are part of 70S ribosomes or polysomes). Required for efficient processing of 16S rRNA. May interact with the 5'-terminal helix region of 16S rRNA. This Shewanella pealeana (strain ATCC 700345 / ANG-SQ1) protein is Ribosome-binding factor A.